The chain runs to 1045 residues: Bifunctional glutamine synthetase adenylyltransferase/adenylyl-removing enzyme (1045 aa).

Residues 1-527 are adenylyl removase; it reads MSGPLRSERK…LHSQLFYRPL (527 aa). The adenylyl transferase stretch occupies residues 533–1045; it reads NLSADAIRLS…GVDSMEQREF (513 aa).

The protein belongs to the GlnE family. Mg(2+) serves as cofactor.

It catalyses the reaction [glutamine synthetase]-O(4)-(5'-adenylyl)-L-tyrosine + phosphate = [glutamine synthetase]-L-tyrosine + ADP. It carries out the reaction [glutamine synthetase]-L-tyrosine + ATP = [glutamine synthetase]-O(4)-(5'-adenylyl)-L-tyrosine + diphosphate. Involved in the regulation of glutamine synthetase GlnA, a key enzyme in the process to assimilate ammonia. When cellular nitrogen levels are high, the C-terminal adenylyl transferase (AT) inactivates GlnA by covalent transfer of an adenylyl group from ATP to specific tyrosine residue of GlnA, thus reducing its activity. Conversely, when nitrogen levels are low, the N-terminal adenylyl removase (AR) activates GlnA by removing the adenylyl group by phosphorolysis, increasing its activity. The regulatory region of GlnE binds the signal transduction protein PII (GlnB) which indicates the nitrogen status of the cell. The polypeptide is Bifunctional glutamine synthetase adenylyltransferase/adenylyl-removing enzyme (Corynebacterium glutamicum (strain ATCC 13032 / DSM 20300 / JCM 1318 / BCRC 11384 / CCUG 27702 / LMG 3730 / NBRC 12168 / NCIMB 10025 / NRRL B-2784 / 534)).